We begin with the raw amino-acid sequence, 170 residues long: Crossover junction endodeoxyribonuclease RuvC (170 aa).

Residues Asp8, Glu67, and Asp139 contribute to the active site. Residues Asp8, Glu67, and Asp139 each coordinate Mg(2+).

The protein belongs to the RuvC family. In terms of assembly, homodimer which binds Holliday junction (HJ) DNA. The HJ becomes 2-fold symmetrical on binding to RuvC with unstacked arms; it has a different conformation from HJ DNA in complex with RuvA. In the full resolvosome a probable DNA-RuvA(4)-RuvB(12)-RuvC(2) complex forms which resolves the HJ. Mg(2+) serves as cofactor.

Its subcellular location is the cytoplasm. It carries out the reaction Endonucleolytic cleavage at a junction such as a reciprocal single-stranded crossover between two homologous DNA duplexes (Holliday junction).. In terms of biological role, the RuvA-RuvB-RuvC complex processes Holliday junction (HJ) DNA during genetic recombination and DNA repair. Endonuclease that resolves HJ intermediates. Cleaves cruciform DNA by making single-stranded nicks across the HJ at symmetrical positions within the homologous arms, yielding a 5'-phosphate and a 3'-hydroxyl group; requires a central core of homology in the junction. The consensus cleavage sequence is 5'-(A/T)TT(C/G)-3'. Cleavage occurs on the 3'-side of the TT dinucleotide at the point of strand exchange. HJ branch migration catalyzed by RuvA-RuvB allows RuvC to scan DNA until it finds its consensus sequence, where it cleaves and resolves the cruciform DNA. This is Crossover junction endodeoxyribonuclease RuvC from Pectobacterium atrosepticum (strain SCRI 1043 / ATCC BAA-672) (Erwinia carotovora subsp. atroseptica).